We begin with the raw amino-acid sequence, 748 residues long: Histone-lysine N-methyltransferase EZH2 (748 aa).

Residues 184–199 (YEDDEDGDDNQDDEQD) show a composition bias toward acidic residues. Disordered regions lie at residues 184–220 (YEDDEDGDDNQDDEQDDTAKDQDDNMEDKETQPLRKF) and 342–428 (AERI…NIEP). Residues 200 to 220 (DTAKDQDDNMEDKETQPLRKF) show a composition bias toward basic and acidic residues. Basic residues predominate over residues 347–359 (TPPKRPSGRRRGR). The segment covering 362 to 374 (NNTSRPSTPTVNV) has biased composition (polar residues). Basic and acidic residues predominate over residues 376–387 (EAKDTDSDREAG). The 103-residue stretch at 505-607 (CRKIQLKKDG…SKNVSCKNCS (103 aa)) folds into the CXC domain. The SET domain occupies 614–729 (KHLLLAPSDV…TGEELFFDYR (116 aa)).

It belongs to the class V-like SAM-binding methyltransferase superfamily. Histone-lysine methyltransferase family. EZ subfamily. As to quaternary structure, component of the prc2/eed-ezh2 complex.

The protein localises to the nucleus. The catalysed reaction is L-lysyl(27)-[histone H3] + 3 S-adenosyl-L-methionine = N(6),N(6),N(6)-trimethyl-L-lysyl(27)-[histone H3] + 3 S-adenosyl-L-homocysteine + 3 H(+). Polycomb group (PcG) protein. Catalytic subunit of the prc2/eed-ezh2 complex, which methylates 'Lys-9' and 'Lys-27' of histone H3, leading to transcriptional repression of the affected target gene. May repress transcription of the egr2 and en2 genes. May regulate the circadian clock via histone methylation at the promoter of the circadian genes. This chain is Histone-lysine N-methyltransferase EZH2 (ezh2-a), found in Xenopus laevis (African clawed frog).